The primary structure comprises 441 residues: DNA-binding protein (441 aa).

Over residues 1-18 (MERTPKRAHGFRSTKPVK) the composition is skewed to basic residues. Residues 1–85 (MERTPKRAHG…EESPEAPLSD (85 aa)) form a disordered region. Composition is skewed to acidic residues over residues 24–33 (MMEEEEEEVE) and 67–79 (VDDE…EESP). Zn(2+) contacts are provided by Cys191 and His193. The interval 204-236 (VELNPSSEAGKRALAEQNGVIEKNRFGRQVVVL) is flexible loop. 6 residues coordinate Zn(2+): Cys244, Cys262, Cys305, Cys307, Cys359, and Cys380. A C-terminal arm, DBP binding region spans residues 426–441 (EVLAPVSPIASDDPFA).

This sequence belongs to the adenoviridae E2A DNA-binding protein family. In terms of assembly, homomultimerizes on viral ssDNA bound to pTP. Forms a initiation complex with viral polymerase, pTP and hosts NFIA and POU2F1/OCT1. Interacts with host SRCAP.

It is found in the host nucleus. Its function is as follows. Plays a role in the elongation phase of viral strand displacement replication by unwinding the template in an ATP-independent fashion, employing its capacity to form multimers. Also enhances the rate of initiation. Released from template upon second strand synthesis. Assembles in complex with viral pTP, viral pol, host NFIA and host POU2F1/OCT1 on viral origin of replication. Covers the whole ssDNA genome during synthesis. The complementary strand synthesis induces its relese from DNA template. May inhibit cellular transcription mediated by the interaction between host SRCAP and CBP. In Fowl adenovirus A serotype 1 (strain CELO / Phelps) (FAdV-1), this protein is DNA-binding protein.